The chain runs to 128 residues: L-ectoine synthase (128 aa).

Belongs to the ectoine synthase family.

It carries out the reaction (2S)-4-acetamido-2-aminobutanoate = L-ectoine + H2O. It functions in the pathway amine and polyamine biosynthesis; ectoine biosynthesis; L-ectoine from L-aspartate 4-semialdehyde: step 3/3. Catalyzes the circularization of gamma-N-acetyl-alpha,gamma-diaminobutyric acid (ADABA) to ectoine (1,4,5,6-tetrahydro-2-methyl-4-pyrimidine carboxylic acid), which is an excellent osmoprotectant. The chain is L-ectoine synthase from Oceanobacillus iheyensis (strain DSM 14371 / CIP 107618 / JCM 11309 / KCTC 3954 / HTE831).